The chain runs to 319 residues: Acetyl esterase (319 aa).

The short motif at 91-93 (HGG) is the Involved in the stabilization of the negatively charged intermediate by the formation of the oxyanion hole element. Catalysis depends on residues Ser-165, Asp-262, and His-292.

This sequence belongs to the 'GDXG' lipolytic enzyme family. Homodimer. Interacts with MalT and MelA.

The protein localises to the cytoplasm. Functionally, displays esterase activity towards short chain fatty esters (acyl chain length of up to 8 carbons). Able to hydrolyze triacetylglycerol (triacetin) and tributyrylglycerol (tributyrin), but not trioleylglycerol (triolein) or cholesterol oleate. Negatively regulates MalT activity by antagonizing maltotriose binding. Inhibits MelA galactosidase activity. This Escherichia coli O7:K1 (strain IAI39 / ExPEC) protein is Acetyl esterase.